We begin with the raw amino-acid sequence, 136 residues long: Gonadotropin subunit beta-2 (136 aa).

Positions 1-21 are cleaved as a signal peptide; that stretch reads MVCLFLGASSFIWSLAPAAAA. Intrachain disulfides connect C27/C75, C41/C90, C44/C128, C52/C106, C56/C108, and C111/C118. N31 is a glycosylation site (N-linked (GlcNAc...) asparagine).

This sequence belongs to the glycoprotein hormones subunit beta family. As to quaternary structure, heterodimer of an alpha and a beta chain.

It is found in the secreted. Functionally, involved in gametogenesis and steroidogenesis. In Fundulus heteroclitus (Killifish), this protein is Gonadotropin subunit beta-2 (cgbb).